The following is a 182-amino-acid chain: Nucleoid-associated protein At2g24020, chloroplastic (182 aa).

The N-terminal 48 residues, 1–48 (MASMAATTNFTKSMLFPFSHVSGNASLNSQRRTWPKQYKSKNGYRSLR), are a transit peptide targeting the chloroplast.

Belongs to the YbaB/EbfC family. In terms of assembly, homodimer. Interacts with ALB3 and ALB4.

The protein localises to the plastid. It localises to the chloroplast stroma. Its function is as follows. Participates with ALB4 in thylakoid protein targeting. May function with specific subset of thylakoidal proteins. Binds to DNA and alters its conformation. May be involved in regulation of gene expression, nucleoid organization and DNA protection. This is Nucleoid-associated protein At2g24020, chloroplastic from Arabidopsis thaliana (Mouse-ear cress).